We begin with the raw amino-acid sequence, 132 residues long: Holo-[acyl-carrier-protein] synthase (132 aa).

D8 and E57 together coordinate Mg(2+).

This sequence belongs to the P-Pant transferase superfamily. AcpS family. Mg(2+) is required as a cofactor.

The protein resides in the cytoplasm. The catalysed reaction is apo-[ACP] + CoA = holo-[ACP] + adenosine 3',5'-bisphosphate + H(+). Functionally, transfers the 4'-phosphopantetheine moiety from coenzyme A to a Ser of acyl-carrier-protein. The sequence is that of Holo-[acyl-carrier-protein] synthase from Methylobacterium nodulans (strain LMG 21967 / CNCM I-2342 / ORS 2060).